A 235-amino-acid chain; its full sequence is 5'-methylthioadenosine/S-adenosylhomocysteine nucleosidase (235 aa).

Glutamate 12 acts as the Proton acceptor in catalysis. Substrate-binding positions include glycine 78, isoleucine 152, and 173–174 (ME). The Proton donor role is filled by aspartate 197.

Belongs to the PNP/UDP phosphorylase family. MtnN subfamily. In terms of assembly, homodimer.

The catalysed reaction is S-adenosyl-L-homocysteine + H2O = S-(5-deoxy-D-ribos-5-yl)-L-homocysteine + adenine. The enzyme catalyses S-methyl-5'-thioadenosine + H2O = 5-(methylsulfanyl)-D-ribose + adenine. It carries out the reaction 5'-deoxyadenosine + H2O = 5-deoxy-D-ribose + adenine. Its pathway is amino-acid biosynthesis; L-methionine biosynthesis via salvage pathway; S-methyl-5-thio-alpha-D-ribose 1-phosphate from S-methyl-5'-thioadenosine (hydrolase route): step 1/2. Catalyzes the irreversible cleavage of the glycosidic bond in both 5'-methylthioadenosine (MTA) and S-adenosylhomocysteine (SAH/AdoHcy) to adenine and the corresponding thioribose, 5'-methylthioribose and S-ribosylhomocysteine, respectively. Also cleaves 5'-deoxyadenosine, a toxic by-product of radical S-adenosylmethionine (SAM) enzymes, into 5-deoxyribose and adenine. Thus, is required for in vivo function of the radical SAM enzymes biotin synthase and lipoic acid synthase, that are inhibited by 5'-deoxyadenosine accumulation. This Proteus mirabilis (strain HI4320) protein is 5'-methylthioadenosine/S-adenosylhomocysteine nucleosidase.